Reading from the N-terminus, the 345-residue chain is MSTDPDEREVSPALTVGDGDVDVSLRPRSLREFIGQPRVREQLQLVIQGAKNRGGTPDHILLSGPPGLGKTSLAVIIAAELGSSLRMTSGPALERAGDLAAMLSNLVEHDVLFIDEIHRIARPAEEMLYLAMEDFRVDVVVGKGPGATSIPLDVAPFTLVGATTRSGALTGPLRDRFGFTAHMDFYEPAELERVLVRSAGILGIQLGADAGAEIARRSRGTPRIANRLLRRVRDFAEVRADGVITRDVAKAALAVYDVDELGLDRLDRAVLSALTRSFSGGPVGVSTLAVAVGEEASTVEEVCEPFLVRAGMVARTPRGRVATALAWTHLGMTPPAGANQPGLFE.

Residues 1-186 (MSTDPDEREV…FGFTAHMDFY (186 aa)) are large ATPase domain (RuvB-L). Residues Leu25, Arg26, Gly67, Lys70, Thr71, Ser72, 133–135 (EDF), Arg176, Tyr186, and Arg223 contribute to the ATP site. Thr71 is a binding site for Mg(2+). The interval 187–257 (EPAELERVLV…VAKAALAVYD (71 aa)) is small ATPAse domain (RuvB-S). The head domain (RuvB-H) stretch occupies residues 260–345 (ELGLDRLDRA…AGANQPGLFE (86 aa)). The DNA site is built by Arg315 and Arg320.

This sequence belongs to the RuvB family. Homohexamer. Forms an RuvA(8)-RuvB(12)-Holliday junction (HJ) complex. HJ DNA is sandwiched between 2 RuvA tetramers; dsDNA enters through RuvA and exits via RuvB. An RuvB hexamer assembles on each DNA strand where it exits the tetramer. Each RuvB hexamer is contacted by two RuvA subunits (via domain III) on 2 adjacent RuvB subunits; this complex drives branch migration. In the full resolvosome a probable DNA-RuvA(4)-RuvB(12)-RuvC(2) complex forms which resolves the HJ.

Its subcellular location is the cytoplasm. The enzyme catalyses ATP + H2O = ADP + phosphate + H(+). Its function is as follows. The RuvA-RuvB-RuvC complex processes Holliday junction (HJ) DNA during genetic recombination and DNA repair, while the RuvA-RuvB complex plays an important role in the rescue of blocked DNA replication forks via replication fork reversal (RFR). RuvA specifically binds to HJ cruciform DNA, conferring on it an open structure. The RuvB hexamer acts as an ATP-dependent pump, pulling dsDNA into and through the RuvAB complex. RuvB forms 2 homohexamers on either side of HJ DNA bound by 1 or 2 RuvA tetramers; 4 subunits per hexamer contact DNA at a time. Coordinated motions by a converter formed by DNA-disengaged RuvB subunits stimulates ATP hydrolysis and nucleotide exchange. Immobilization of the converter enables RuvB to convert the ATP-contained energy into a lever motion, pulling 2 nucleotides of DNA out of the RuvA tetramer per ATP hydrolyzed, thus driving DNA branch migration. The RuvB motors rotate together with the DNA substrate, which together with the progressing nucleotide cycle form the mechanistic basis for DNA recombination by continuous HJ branch migration. Branch migration allows RuvC to scan DNA until it finds its consensus sequence, where it cleaves and resolves cruciform DNA. The sequence is that of Holliday junction branch migration complex subunit RuvB from Mycobacterium ulcerans (strain Agy99).